A 122-amino-acid chain; its full sequence is UPF0102 protein CE1920 (122 aa).

It belongs to the UPF0102 family.

This Corynebacterium efficiens (strain DSM 44549 / YS-314 / AJ 12310 / JCM 11189 / NBRC 100395) protein is UPF0102 protein CE1920.